The chain runs to 167 residues: Urease accessory protein UreE (167 aa).

The segment at 135-167 is disordered; that stretch reads SGAYGGGHHHSHSHHEGDEFHSKPRLHHFGGSQ. The segment covering 157-167 has biased composition (basic residues); that stretch reads KPRLHHFGGSQ.

This sequence belongs to the UreE family.

The protein resides in the cytoplasm. In terms of biological role, involved in urease metallocenter assembly. Binds nickel. Probably functions as a nickel donor during metallocenter assembly. The sequence is that of Urease accessory protein UreE from Nitrosococcus oceani (strain ATCC 19707 / BCRC 17464 / JCM 30415 / NCIMB 11848 / C-107).